The primary structure comprises 194 residues: Ras-like protein rasS (194 aa).

Residue 10–17 (GPGGVGKS) participates in GTP binding. Positions 32–40 (YDPTLEDSY) match the Effector region motif. GTP-binding positions include 57–61 (DTAGQ) and 116–119 (NKCD). Residues 168-194 (RQSNQHSNSQEQNTDQPIKKKKSCNLL) form a disordered region. Over residues 169–180 (QSNQHSNSQEQN) the composition is skewed to low complexity. Cys-191 is modified (cysteine methyl ester). Cys-191 carries the S-geranylgeranyl cysteine lipid modification. A propeptide spans 192-194 (NLL) (removed in mature form).

This sequence belongs to the small GTPase superfamily. Ras family.

It localises to the cell membrane. It carries out the reaction GTP + H2O = GDP + phosphate + H(+). Ras proteins bind GDP/GTP and possess intrinsic GTPase activity. The chain is Ras-like protein rasS (rasS) from Dictyostelium discoideum (Social amoeba).